Consider the following 233-residue polypeptide: Favin (233 aa).

Mn(2+)-binding residues include Glu120 and Asp122. The Ca(2+) site is built by Asp122, Phe124, Asn126, and Asp130. The Mn(2+) site is built by Asp130 and His137. N-linked (GlcNAc...) asparagine glycosylation occurs at Asn168.

The protein belongs to the leguminous lectin family. As to quaternary structure, heterodimer of an alpha and a beta chain.

The chain is Favin from Vicia faba (Broad bean).